An 833-amino-acid polypeptide reads, in one-letter code: Glycerol-3-phosphate acyltransferase (833 aa).

An HXXXXD motif motif is present at residues 309–314 (CHRSHI).

It belongs to the GPAT/DAPAT family.

The protein resides in the cell inner membrane. The enzyme catalyses sn-glycerol 3-phosphate + an acyl-CoA = a 1-acyl-sn-glycero-3-phosphate + CoA. It participates in phospholipid metabolism; CDP-diacylglycerol biosynthesis; CDP-diacylglycerol from sn-glycerol 3-phosphate: step 1/3. This chain is Glycerol-3-phosphate acyltransferase, found in Pseudomonas syringae pv. syringae (strain B728a).